The following is a 601-amino-acid chain: Putative Lon protease homolog (601 aa).

In terms of domain architecture, Lon proteolytic spans 363–560 (GEIVGQINGL…YQACELLFGR (198 aa)). Catalysis depends on residues S455 and K498.

Belongs to the peptidase S16 family.

This is Putative Lon protease homolog from Haemophilus influenzae (strain ATCC 51907 / DSM 11121 / KW20 / Rd).